A 485-amino-acid polypeptide reads, in one-letter code: Zinc finger protein 639 (485 aa).

A compositionally biased stretch (basic residues) spans 1–14; that stretch reads MNEYPKKRKRKTLH. Disordered stretches follow at residues 1–23 and 54–80; these read MNEYPKKRKRKTLHPSRYSDSSG and DNKDDDSDPETANDLPKFADGTKARNR. Residue S60 is modified to Phosphoserine. K76 is covalently cross-linked (Glycyl lysine isopeptide (Lys-Gly) (interchain with G-Cter in SUMO2)). A Phosphoserine modification is found at S88. The disordered stretch occupies residues 115–136; it reads ASPESVHQHTQEESPIEVHTSE. Residues K177, K181, and K226 each participate in a glycyl lysine isopeptide (Lys-Gly) (interchain with G-Cter in SUMO2) cross-link. 8 C2H2-type zinc fingers span residues 204-227, 233-255, 260-283, 289-311, 374-397, 403-425, 431-454, and 460-482; these read YKCELCEFNSKYFSDLKQHVILKH, NVCRVCKESFSTNMLLIEHAKLH, YICKYCDYKTVIFENLSQHIADTH, YWCEQCDVQFSSSSELYLHFQEH, FVCQVCGFRSRLHTNVNRHVAIEH, HVCDDCGKGFSSMLEYCKHLNSH, YLCQYCEYSTGQIDDLKIHLDFKH, and HKCSECLMRFGNERDLLGHLQVH. Residues 371–455 are interaction with CTNNA2; it reads KNFFVCQVCG…LKIHLDFKHS (85 aa).

The protein belongs to the krueppel C2H2-type zinc-finger protein family. As to quaternary structure, interacts with CTNNA2.

The protein localises to the nucleus. Functionally, binds DNA and may function as a transcriptional repressor. The polypeptide is Zinc finger protein 639 (Znf639) (Mus musculus (Mouse)).